The sequence spans 465 residues: Siroheme synthase (465 aa).

Residues 1 to 203 (MDFLPLFHSL…GRPAEAERLL (203 aa)) are precorrin-2 dehydrogenase /sirohydrochlorin ferrochelatase. NAD(+) is bound by residues 22 to 23 (EV) and 43 to 44 (PQ). S128 is subject to Phosphoserine. The interval 217–465 (GEVYLVGAGP…AWFEGAREDA (249 aa)) is uroporphyrinogen-III C-methyltransferase. Position 226 (P226) interacts with S-adenosyl-L-methionine. The Proton acceptor role is filled by D249. The Proton donor role is filled by K271. S-adenosyl-L-methionine-binding positions include 302-304 (GGD), I307, 332-333 (TA), M384, and G413.

This sequence in the N-terminal section; belongs to the precorrin-2 dehydrogenase / sirohydrochlorin ferrochelatase family. The protein in the C-terminal section; belongs to the precorrin methyltransferase family.

It carries out the reaction uroporphyrinogen III + 2 S-adenosyl-L-methionine = precorrin-2 + 2 S-adenosyl-L-homocysteine + H(+). The enzyme catalyses precorrin-2 + NAD(+) = sirohydrochlorin + NADH + 2 H(+). The catalysed reaction is siroheme + 2 H(+) = sirohydrochlorin + Fe(2+). It participates in cofactor biosynthesis; adenosylcobalamin biosynthesis; precorrin-2 from uroporphyrinogen III: step 1/1. Its pathway is cofactor biosynthesis; adenosylcobalamin biosynthesis; sirohydrochlorin from precorrin-2: step 1/1. The protein operates within porphyrin-containing compound metabolism; siroheme biosynthesis; precorrin-2 from uroporphyrinogen III: step 1/1. It functions in the pathway porphyrin-containing compound metabolism; siroheme biosynthesis; siroheme from sirohydrochlorin: step 1/1. It participates in porphyrin-containing compound metabolism; siroheme biosynthesis; sirohydrochlorin from precorrin-2: step 1/1. In terms of biological role, multifunctional enzyme that catalyzes the SAM-dependent methylations of uroporphyrinogen III at position C-2 and C-7 to form precorrin-2 via precorrin-1. Then it catalyzes the NAD-dependent ring dehydrogenation of precorrin-2 to yield sirohydrochlorin. Finally, it catalyzes the ferrochelation of sirohydrochlorin to yield siroheme. This chain is Siroheme synthase, found in Pseudomonas aeruginosa (strain UCBPP-PA14).